The primary structure comprises 556 residues: U3 small nucleolar RNA-associated protein 18 homolog (556 aa).

The segment covering 1-24 (MPPERRRRMKLDRRTGAKPKRKPG) has biased composition (basic residues). Positions 1–70 (MPPERRRRMK…IAVAAAEEER (70 aa)) are disordered. The segment covering 43–65 (APSSQRKPPARPSAAAAAIAVAA) has biased composition (low complexity). Lysine 84 is covalently cross-linked (Glycyl lysine isopeptide (Lys-Gly) (interchain with G-Cter in SUMO2)). The disordered stretch occupies residues 111–143 (RGPRVQEHEDSGDSEVENEAKGNFPPQKKPVWV). Residues serine 121 and serine 124 each carry the phosphoserine modification. Residues lysine 183 and lysine 201 each participate in a glycyl lysine isopeptide (Lys-Gly) (interchain with G-Cter in SUMO2) cross-link. The interval 193–219 (VPAWAETTKRKTSSDDESEEDEDDLLQ) is disordered. Threonine 204 is modified (phosphothreonine). Serine 205, serine 206, and serine 210 each carry phosphoserine. A compositionally biased stretch (acidic residues) spans 207-216 (DDESEEDEDD). Phosphothreonine is present on threonine 221. 6 WD repeats span residues 249-288 (PTVA…NPKI), 293-333 (LERF…LIPV), 339-380 (LKEK…GSMK), 381-419 (INGR…CLNR), 421-462 (VDEG…QETN), and 471-512 (NLVT…VFSN). Lysine 517 participates in a covalent cross-link: Glycyl lysine isopeptide (Lys-Gly) (interchain with G-Cter in SUMO2).

Belongs to the WD repeat UTP18 family. As to quaternary structure, part of the small subunit (SSU) processome, composed of more than 70 proteins and the RNA chaperone small nucleolar RNA (snoRNA) U3.

The protein resides in the nucleus. Its subcellular location is the nucleolus. In terms of biological role, part of the small subunit (SSU) processome, first precursor of the small eukaryotic ribosomal subunit. During the assembly of the SSU processome in the nucleolus, many ribosome biogenesis factors, an RNA chaperone and ribosomal proteins associate with the nascent pre-rRNA and work in concert to generate RNA folding, modifications, rearrangements and cleavage as well as targeted degradation of pre-ribosomal RNA by the RNA exosome. Involved in nucleolar processing of pre-18S ribosomal RNA. The protein is U3 small nucleolar RNA-associated protein 18 homolog of Homo sapiens (Human).